Here is an 866-residue protein sequence, read N- to C-terminus: Replication factor C small subunit (866 aa).

Residues 183-313 (WLGYFIGDGH…VTYALAGFGI (131 aa)) enclose the DOD-type homing endonuclease domain.

It belongs to the activator 1 small subunits family. RfcS subfamily. As to quaternary structure, heteromultimer composed of small subunits (RfcS) and large subunits (RfcL). Post-translationally, this protein undergoes a protein self splicing that involves a post-translational excision of the intervening region (intein) followed by peptide ligation.

In terms of biological role, part of the RFC clamp loader complex which loads the PCNA sliding clamp onto DNA. This chain is Replication factor C small subunit (rfcS), found in Thermococcus kodakarensis (strain ATCC BAA-918 / JCM 12380 / KOD1) (Pyrococcus kodakaraensis (strain KOD1)).